The primary structure comprises 85 residues: MPKLEMMLLVLLILPLCYIDAVGPPPPWNMEDEIIEHWQKLHCHEISDPTPWILCSPEPLCGGKGCCAQEVCDCSGPVCTCPPCL.

Positions 1–21 (MPKLEMMLLVLLILPLCYIDA) are cleaved as a signal peptide. Positions 22–40 (VGPPPPWNMEDEIIEHWQK) are excised as a propeptide.

The protein belongs to the conotoxin D superfamily. Contains 5 disulfide bonds. Expressed by the venom duct.

The protein resides in the secreted. In terms of biological role, probable neurotoxin. This chain is Conotoxin Lt28.2, found in Conus litteratus (Lettered cone).